The following is a 191-amino-acid chain: Ribonuclease M5 (191 aa).

Residues 8–91 (HEFIVVEGRD…AFINRQDALP (84 aa)) enclose the Toprim domain. Positions 14, 60, and 62 each coordinate Mg(2+).

Belongs to the ribonuclease M5 family. Mg(2+) serves as cofactor.

The protein resides in the cytoplasm. It catalyses the reaction Endonucleolytic cleavage of RNA, removing 21 and 42 nucleotides, respectively, from the 5'- and 3'-termini of a 5S-rRNA precursor.. Its function is as follows. Required for correct processing of both the 5' and 3' ends of 5S rRNA precursor. Cleaves both sides of a double-stranded region yielding mature 5S rRNA in one step. The chain is Ribonuclease M5 from Listeria monocytogenes serovar 1/2a (strain ATCC BAA-679 / EGD-e).